The following is a 459-amino-acid chain: UDP-N-acetylmuramoylalanine--D-glutamate ligase (459 aa).

131–137 (GANGKST) is a binding site for ATP.

This sequence belongs to the MurCDEF family.

It localises to the cytoplasm. The enzyme catalyses UDP-N-acetyl-alpha-D-muramoyl-L-alanine + D-glutamate + ATP = UDP-N-acetyl-alpha-D-muramoyl-L-alanyl-D-glutamate + ADP + phosphate + H(+). It participates in cell wall biogenesis; peptidoglycan biosynthesis. Functionally, cell wall formation. Catalyzes the addition of glutamate to the nucleotide precursor UDP-N-acetylmuramoyl-L-alanine (UMA). This Methylococcus capsulatus (strain ATCC 33009 / NCIMB 11132 / Bath) protein is UDP-N-acetylmuramoylalanine--D-glutamate ligase.